The sequence spans 5255 residues: Bacitracin synthase 1 (5255 aa).

Residues 39 to 612 (LHELFEEQAM…IKELSAFIEA (574 aa)) are domain 1 (isoleucine-activating). Residues 519–531 (VDRKALPEPDRTA) are compositionally biased toward basic and acidic residues. Positions 519–542 (VDRKALPEPDRTAGAENEYEAPRN) are disordered. The 76-residue stretch at 539-614 (APRNETEEKL…ELSAFIEANH (76 aa)) folds into the Carrier 1 domain. Ser574 carries the post-translational modification O-(pantetheine 4'-phosphoryl)serine. The interval 621–1037 (TLVTRAADPE…ITWDYVEQIF (417 aa)) is cyclization. The tract at residues 1109–1648 (HHDEVMTYQE…FKNDTIIALD (540 aa)) is domain 2 (cysteine-activating). 4 consecutive Carrier domains span residues 1580 to 1655 (LPEN…KNRE), 2616 to 2691 (APRD…VRRR), 3659 to 3733 (PPRN…TEET), and 5166 to 5241 (APRN…LTAE). O-(pantetheine 4'-phosphoryl)serine occurs at positions 1615, 2651, 3694, and 5201. Residues 2124–2689 (GKAIHQLFEE…IKGLRDISVR (566 aa)) form a domain 3 (leucine-activating) region. The interval 3164–3732 (DHPAVAFGDE…KDLSRFITEE (569 aa)) is domain 4 (glutamine-activating). Residues 4668 to 5249 (LHELFEEQAM…AEAESAVSEE (582 aa)) are domain 5 (isoleucine-activating).

The protein belongs to the ATP-dependent AMP-binding enzyme family. In terms of assembly, large multienzyme complex of BA1, BA2 and BA3. Pantetheine 4'-phosphate is required as a cofactor.

The enzyme catalyses L-glutamate = D-glutamate. It participates in antibiotic biosynthesis; bacitracin biosynthesis. In terms of biological role, activates five amino acids, incorporates two D-amino acids, releases and cyclizes the mature bacitracin. This is Bacitracin synthase 1 (bacA) from Bacillus licheniformis.